The chain runs to 116 residues: Holo-[acyl-carrier-protein] synthase (116 aa).

The Mg(2+) site is built by D5 and E50.

It belongs to the P-Pant transferase superfamily. AcpS family. The cofactor is Mg(2+).

The protein resides in the cytoplasm. The enzyme catalyses apo-[ACP] + CoA = holo-[ACP] + adenosine 3',5'-bisphosphate + H(+). Transfers the 4'-phosphopantetheine moiety from coenzyme A to a Ser of acyl-carrier-protein. In Nitratiruptor sp. (strain SB155-2), this protein is Holo-[acyl-carrier-protein] synthase.